The following is a 406-amino-acid chain: 3-oxoacyl-[acyl-carrier-protein] synthase 1 (406 aa).

The region spanning 1 to 403 is the Ketosynthase family 3 (KS3) domain; sequence MRRTVITGFG…GTNATLIFKR (403 aa). Active-site for beta-ketoacyl synthase activity residues include Cys162, His297, and His332.

Belongs to the thiolase-like superfamily. Beta-ketoacyl-ACP synthases family. In terms of assembly, homodimer.

The protein localises to the cytoplasm. The catalysed reaction is a fatty acyl-[ACP] + malonyl-[ACP] + H(+) = a 3-oxoacyl-[ACP] + holo-[ACP] + CO2. The enzyme catalyses (3Z)-decenoyl-[ACP] + malonyl-[ACP] + H(+) = 3-oxo-(5Z)-dodecenoyl-[ACP] + holo-[ACP] + CO2. The protein operates within lipid metabolism; fatty acid biosynthesis. Involved in the type II fatty acid elongation cycle. Catalyzes the elongation of a wide range of acyl-ACP by the addition of two carbons from malonyl-ACP to an acyl acceptor. Can also use unsaturated fatty acids. Catalyzes a key reaction in unsaturated fatty acid (UFA) synthesis, the elongation of the cis-3-decenoyl-ACP produced by FabA. The polypeptide is 3-oxoacyl-[acyl-carrier-protein] synthase 1 (fabB) (Haemophilus influenzae (strain ATCC 51907 / DSM 11121 / KW20 / Rd)).